A 420-amino-acid chain; its full sequence is Putative U-box domain-containing protein 58 (420 aa).

The MIF4G domain maps to 4-168 (NSYVLFARLC…EDALAMKKED (165 aa)). A coiled-coil region spans residues 139 to 352 (SRVVELEGNY…TAKEQMEKRQ (214 aa)). One can recognise a U-box domain in the interval 352–420 (QPPSSFFCPI…ALRSAIEELV (69 aa)).

The catalysed reaction is S-ubiquitinyl-[E2 ubiquitin-conjugating enzyme]-L-cysteine + [acceptor protein]-L-lysine = [E2 ubiquitin-conjugating enzyme]-L-cysteine + N(6)-ubiquitinyl-[acceptor protein]-L-lysine.. It participates in protein modification; protein ubiquitination. Functionally, functions as an E3 ubiquitin ligase. The protein is Putative U-box domain-containing protein 58 (PUB58) of Arabidopsis thaliana (Mouse-ear cress).